The primary structure comprises 113 residues: Large ribosomal subunit protein uL22 (113 aa).

The protein belongs to the universal ribosomal protein uL22 family. As to quaternary structure, part of the 50S ribosomal subunit.

Its function is as follows. This protein binds specifically to 23S rRNA; its binding is stimulated by other ribosomal proteins, e.g. L4, L17, and L20. It is important during the early stages of 50S assembly. It makes multiple contacts with different domains of the 23S rRNA in the assembled 50S subunit and ribosome. The globular domain of the protein is located near the polypeptide exit tunnel on the outside of the subunit, while an extended beta-hairpin is found that lines the wall of the exit tunnel in the center of the 70S ribosome. The protein is Large ribosomal subunit protein uL22 of Bacillus cytotoxicus (strain DSM 22905 / CIP 110041 / 391-98 / NVH 391-98).